A 304-amino-acid chain; its full sequence is N-acetyllactosaminide alpha-2,3-sialyltransferase (304 aa).

Residues 221–225 (FPHPA), 242–243 (FE), and 262–263 (SS) contribute to the CMP-N-acetyl-beta-neuraminate site. Catalysis depends on His-223, which acts as the Proton donor.

The protein belongs to the glycosyltransferase 52 family.

It carries out the reaction a beta-D-galactosyl-(1-&gt;4)-N-acetyl-beta-D-glucosaminyl derivative + CMP-N-acetyl-beta-neuraminate = an N-acetyl-alpha-neuraminyl-(2-&gt;3)-beta-D-galactosyl-(1-&gt;4)-N-acetyl-beta-D-glucosaminyl derivative + CMP + H(+). It participates in bacterial outer membrane biogenesis; lipooligosaccharide biosynthesis. Its function is as follows. Catalyzes the transfer of sialic acid from the substrate CMP-N-acetylneuraminate to the terminal galactose residue of the N-acetyllactosamine moiety of surface lipooligosaccharide (LOS). Thus, functions in the sialylation of LOS, which plays a role in the evasion of the host immune response. This is N-acetyllactosaminide alpha-2,3-sialyltransferase from Haemophilus influenzae (strain ATCC 51907 / DSM 11121 / KW20 / Rd).